Reading from the N-terminus, the 882-residue chain is Translation initiation factor IF-2 (882 aa).

The segment at 50-299 is disordered; sequence SFKSANTTKP…KERPLPETLV (250 aa). Composition is skewed to basic and acidic residues over residues 60 to 71 and 84 to 96; these read STEKDSKNSSRK and RRRD…DNRH. The span at 97–108 shows a compositional bias: basic residues; it reads GNNKRRNNKFKK. Basic and acidic residues-rich tracts occupy residues 109-133, 169-183, 232-242, and 250-263; these read QQND…DLLN, KKVE…EKLE, QKEETKPTRKK, and EVPD…EHSD. Over residues 264–277 the composition is skewed to basic residues; the sequence is KARRRRNKKNKRIN. Positions 278-294 are enriched in basic and acidic residues; that stretch reads QSKEIKKQPTQRKERPL. Positions 383–552 constitute a tr-type G domain; the sequence is KRPPVVTIMG…LLQADVMELK (170 aa). The segment at 392–399 is G1; that stretch reads GHVDHGKT. GTP is bound at residue 392–399; sequence GHVDHGKT. The tract at residues 417 to 421 is G2; that stretch reads GITQK. The interval 438–441 is G3; that stretch reads DTPG. GTP contacts are provided by residues 438–442 and 492–495; these read DTPGH and NKID. Residues 492–495 are G4; that stretch reads NKID. The segment at 528 to 530 is G5; it reads SAK.

The protein belongs to the TRAFAC class translation factor GTPase superfamily. Classic translation factor GTPase family. IF-2 subfamily.

It localises to the cytoplasm. Functionally, one of the essential components for the initiation of protein synthesis. Protects formylmethionyl-tRNA from spontaneous hydrolysis and promotes its binding to the 30S ribosomal subunits. Also involved in the hydrolysis of GTP during the formation of the 70S ribosomal complex. The protein is Translation initiation factor IF-2 of Lactobacillus gasseri (strain ATCC 33323 / DSM 20243 / BCRC 14619 / CIP 102991 / JCM 1131 / KCTC 3163 / NCIMB 11718 / NCTC 13722 / AM63).